The primary structure comprises 54 residues: uncharacterized protein (54 aa).

Positions 23–35 (DVMQEGETAKELN) are enriched in basic and acidic residues. A disordered region spans residues 23-54 (DVMQEGETAKELNYEGEDMQATSSAQNRQTSV). Positions 42–54 (QATSSAQNRQTSV) are enriched in polar residues.

This is an uncharacterized protein from Bacillus subtilis (strain 168).